We begin with the raw amino-acid sequence, 149 residues long: Ribonuclease H (149 aa).

Residues 4 to 145 (QRGVVEAFTD…ADALANQGID (142 aa)) enclose the RNase H type-1 domain. Residues Asp13, Glu51, Asp73, and Asp137 each coordinate Mg(2+).

This sequence belongs to the RNase H family. As to quaternary structure, monomer. Mg(2+) is required as a cofactor.

The protein localises to the cytoplasm. The enzyme catalyses Endonucleolytic cleavage to 5'-phosphomonoester.. In terms of biological role, endonuclease that specifically degrades the RNA of RNA-DNA hybrids. The protein is Ribonuclease H of Halorhodospira halophila (strain DSM 244 / SL1) (Ectothiorhodospira halophila (strain DSM 244 / SL1)).